The following is a 224-amino-acid chain: Charged multivesicular body protein 4b (224 aa).

Positions 1 to 23 (MSVFGKLFGAGGGKAGKGGPTPQ) are disordered. Ser-2 is modified (N-acetylserine). An intramolecular interaction with C-terminus region spans residues 2 to 153 (SVFGKLFGAG…EISTAISKPV (152 aa)). An N6-acetyllysine modification is found at Lys-6. The segment covering 8–19 (FGAGGGKAGKGG) has biased composition (gly residues). Positions 23 to 183 (QEAIQRLRDT…EELDKNLLEI (161 aa)) form a coiled coil. Residue Lys-114 is modified to N6-acetyllysine. The tract at residues 154-224 (GFGEEFDEDE…KELENWAGSM (71 aa)) is intramolecular interaction with N-terminus. A phosphoserine mark is found at Ser-184 and Ser-223. A disordered region spans residues 185 to 224 (GPETVPLPNVPSVALPSKPAKKKEEEDDDMKELENWAGSM).

The protein belongs to the SNF7 family. In terms of assembly, probable core component of the endosomal sorting required for transport complex III (ESCRT-III). ESCRT-III components are thought to multimerize to form a flat lattice on the perimeter membrane of the endosome. Several assembly forms of ESCRT-III may exist that interact and act sequentially. Interacts with CHMP6 and CHMP4C. Interacts with PDCD6IP; the interaction is direct. Interacts with VPS4A; the interaction is direct. Interacts with VPS4B; the interaction is direct. Interacts with CHMP7. Interacts with CFTR; the interaction requires misfolded CFTR. Interacts with PTPN23. Interacts with CC2D1B. ISGylated. Isgylation weakens its interaction with VPS4A.

Its subcellular location is the cytoplasm. It is found in the cytosol. The protein resides in the late endosome membrane. The protein localises to the midbody. It localises to the nucleus envelope. Functionally, probable core component of the endosomal sorting required for transport complex III (ESCRT-III) which is involved in multivesicular bodies (MVBs) formation and sorting of endosomal cargo proteins into MVBs. MVBs contain intraluminal vesicles (ILVs) that are generated by invagination and scission from the limiting membrane of the endosome and mostly are delivered to lysosomes enabling degradation of membrane proteins, such as stimulated growth factor receptors, lysosomal enzymes and lipids. The MVB pathway appears to require the sequential function of ESCRT-O, -I,-II and -III complexes. ESCRT-III proteins mostly dissociate from the invaginating membrane before the ILV is released. The ESCRT machinery also functions in topologically equivalent membrane fission events, such as the terminal stages of cytokinesis. Together with SPAST, the ESCRT-III complex promotes nuclear envelope sealing and mitotic spindle disassembly during late anaphase. Plays a role in the endosomal sorting pathway. ESCRT-III proteins are believed to mediate the necessary vesicle extrusion and/or membrane fission activities, possibly in conjunction with the AAA ATPase VPS4. When overexpressed, membrane-assembled circular arrays of CHMP4B filaments can promote or stabilize negative curvature and outward budding. CHMP4A/B/C are required for the exosomal release of SDCBP, CD63 and syndecan. Majority of the protein exists in a folded closed conformation. This Mus musculus (Mouse) protein is Charged multivesicular body protein 4b (Chmp4b).